Reading from the N-terminus, the 209-residue chain is High frequency lysogenization protein HflD homolog (209 aa).

This sequence belongs to the HflD family.

Its subcellular location is the cytoplasm. It localises to the cell inner membrane. This is High frequency lysogenization protein HflD homolog from Sodalis glossinidius (strain morsitans).